We begin with the raw amino-acid sequence, 1573 residues long: Soluble scavenger receptor cysteine-rich domain-containing protein SSC5D (1573 aa).

Positions 1–16 (MRVLACLLAALVGIQA) are cleaved as a signal peptide. The SRCR 1 domain maps to 20 to 120 (LRLADGPHGC…HEEDAGVVCA (101 aa)). 3 disulfides stabilise this stretch: cysteine 45–cysteine 109, cysteine 58–cysteine 119, and cysteine 89–cysteine 99. Positions 153-192 (EPLVTHAPRPAGNPQNASRKKSPRPKQAKSTRAPLLTTGA) are disordered. N-linked (GlcNAc...) asparagine glycosylation is present at asparagine 168. The segment covering 170–181 (SRKKSPRPKQAK) has biased composition (basic residues). SRCR domains are found at residues 198-298 (LRLV…LVCT) and 304-404 (LRLA…AVCD). 6 disulfide bridges follow: cysteine 223-cysteine 287, cysteine 236-cysteine 297, cysteine 267-cysteine 277, cysteine 329-cysteine 393, cysteine 342-cysteine 403, and cysteine 373-cysteine 383. 2 N-linked (GlcNAc...) asparagine glycosylation sites follow: asparagine 376 and asparagine 420. Residues 412–465 (PPTAPTDSNNSTPREAASRPPSTMTSQAPGTAGVSPPPASPTVLWEPGPEAGSP) are disordered. The segment covering 431–440 (PPSTMTSQAP) has biased composition (polar residues). The SRCR 4 domain maps to 467–568 (LRLVAGPSKC…HNEDVGVTCT (102 aa)). 3 cysteine pairs are disulfide-bonded: cysteine 492/cysteine 557, cysteine 505/cysteine 567, and cysteine 537/cysteine 547. The interval 614–769 (EKTTTKAPGK…SVSTTGESGL (156 aa)) is disordered. Basic residues predominate over residues 626–637 (KSTKKWVTKNAK). Residues 654-671 (AQSPPDLTSQTTAALTTE) show a composition bias toward polar residues. Over residues 672 to 685 (ASRRPTSEFTRRPT) the composition is skewed to basic and acidic residues. Composition is skewed to polar residues over residues 687-702 (EAPQ…TLTP) and 711-735 (KTMA…SIPQ). Positions 772 to 872 (VRLADGPNRC…HEEDVGLTCT (101 aa)) constitute an SRCR 5 domain. Cystine bridges form between cysteine 797-cysteine 861, cysteine 810-cysteine 871, and cysteine 841-cysteine 851. Disordered regions lie at residues 895–1475 (KGTT…PCVA) and 1554–1573 (MPAP…RGDV). The segment covering 924–934 (RLPDTGSKDGY) has biased composition (basic and acidic residues). 2 stretches are compositionally biased toward pro residues: residues 1004–1020 (PPTP…PPGP) and 1083–1093 (TPEPSPTPLPT). The span at 1101–1140 (DPSTPSEVTSLSPTSEQVPESDTTPDLDTTPYSSTVSEYS) shows a compositional bias: polar residues. A compositionally biased stretch (pro residues) spans 1144 to 1160 (DPSPSPHPTTTPDPTMA). Composition is skewed to low complexity over residues 1161-1175 (PDPI…TPHF) and 1185-1277 (PHPT…MPHP). A compositionally biased stretch (pro residues) spans 1278–1328 (TTTPHPTTTPHPTTTPHPTTTPHPTMTPDPTTTPYPTTTPDPTTTPHPTTP). Polar residues-rich tracts occupy residues 1335-1354 (VITT…SPTL) and 1364-1380 (PQLT…TSQI). The segment covering 1381–1401 (PTLEPSPALESSPSRSSTATS) has biased composition (low complexity). Residues 1464-1475 (GQSPGPHGPCVA) show a composition bias toward pro residues.

Interacts with LGALS1 and laminin. As to expression, highly expressed in monocytes/macrophages and T-lymphocytes. Highly expressed in placenta and spleen, and also detected at lower levels in colon, and more weakly in lung, heart and kidney.

The protein resides in the secreted. Its subcellular location is the cytoplasm. Its function is as follows. Binds to extracellular matrix proteins. Binds to pathogen-associated molecular patterns (PAMPs) present on the cell walls of Gram-positive and Gram-negative bacteria and fungi, behaving as a pattern recognition receptor (PRR). Induces bacterial and fungal aggregation and subsequent inhibition of PAMP-induced cytokine release. Does not possess intrinsic bactericidal activity. May play a role in the innate defense and homeostasis of certain epithelial surfaces. This is Soluble scavenger receptor cysteine-rich domain-containing protein SSC5D (SSC5D) from Homo sapiens (Human).